Here is a 926-residue protein sequence, read N- to C-terminus: LPS-assembly protein LptD (926 aa).

Positions 1–22 (MALKSPAFRKKFPLLVTGSLLA) are cleaved as a signal peptide. A disordered region spans residues 58-99 (VDLPPRPVHDTTSVSSNGTVTSQSTSSGEQVAGTQLVTEAKG). Residues 68–85 (TTSVSSNGTVTSQSTSSG) are compositionally biased toward low complexity.

This sequence belongs to the LptD family. In terms of assembly, component of the lipopolysaccharide transport and assembly complex. Interacts with LptE and LptA.

It is found in the cell outer membrane. Together with LptE, is involved in the assembly of lipopolysaccharide (LPS) at the surface of the outer membrane. This is LPS-assembly protein LptD from Pseudomonas savastanoi pv. phaseolicola (strain 1448A / Race 6) (Pseudomonas syringae pv. phaseolicola (strain 1448A / Race 6)).